Consider the following 346-residue polypeptide: Probable RNA methyltransferase PSPA7_3453 (346 aa).

E91 functions as the Proton acceptor in the catalytic mechanism. A Radical SAM core domain is found at 94-320 (LLPRGGLCVS…TKVRNSAGQD (227 aa)). C101 and C325 are joined by a disulfide. Residues C108, C112, and C115 each coordinate [4Fe-4S] cluster. S-adenosyl-L-methionine contacts are provided by residues 153–154 (GE), S183, 206–208 (SLH), and N282. The S-methylcysteine intermediate role is filled by C325.

The protein belongs to the radical SAM superfamily. RlmN family. The cofactor is [4Fe-4S] cluster.

It is found in the cytoplasm. The chain is Probable RNA methyltransferase PSPA7_3453 from Pseudomonas paraeruginosa (strain DSM 24068 / PA7) (Pseudomonas aeruginosa (strain PA7)).